We begin with the raw amino-acid sequence, 470 residues long: Serine carboxypeptidase ctsa-4.1 (470 aa).

An N-terminal signal peptide occupies residues Met1 to Ala19. Residue Asn132 is glycosylated (N-linked (GlcNAc...) asparagine). Residue Ser169 is part of the active site. Asn316 is a glycosylation site (N-linked (GlcNAc...) asparagine). The active site involves Asp380. Asn396 carries N-linked (GlcNAc...) asparagine glycosylation. Residue His441 is part of the active site.

The protein belongs to the peptidase S10 family.

The enzyme catalyses Release of a C-terminal amino acid with broad specificity.. The chain is Serine carboxypeptidase ctsa-4.1 from Caenorhabditis elegans.